The primary structure comprises 309 residues: Movement protein (309 aa).

The tract at residues 245–273 is disordered; the sequence is HLSLNESKTLPSTSTTEAEGSERRIHIGA. Polar residues predominate over residues 246–262; the sequence is LSLNESKTLPSTSTTEA.

Its subcellular location is the host cell junction. The protein localises to the host plasmodesma. Its function is as follows. Transports viral genome to neighboring plant cells directly through plasmosdesmata, without any budding. The movement protein allows efficient cell to cell propagation, by bypassing the host cell wall barrier. Acts by forming a tubular structure at the host plasmodesmata, enlarging it enough to allow free passage of virion capsids. The chain is Movement protein from Solanum lycopersicum (Tomato).